The sequence spans 359 residues: Phospho-N-acetylmuramoyl-pentapeptide-transferase (359 aa).

The next 10 helical transmembrane spans lie at 3-23 (QIMI…PALI), 55-75 (VAIL…GLAF), 80-100 (ITAS…VGFL), 117-137 (TAKT…VLQF), 156-176 (IATV…VVSA), 187-207 (LDGL…LITF), 231-251 (LALI…WNAA), 255-275 (IFMG…LSVT), 280-300 (ILAV…VLQI), and 334-354 (FWLL…GEWL).

Belongs to the glycosyltransferase 4 family. MraY subfamily. Mg(2+) serves as cofactor.

It localises to the cell inner membrane. It carries out the reaction UDP-N-acetyl-alpha-D-muramoyl-L-alanyl-gamma-D-glutamyl-meso-2,6-diaminopimeloyl-D-alanyl-D-alanine + di-trans,octa-cis-undecaprenyl phosphate = di-trans,octa-cis-undecaprenyl diphospho-N-acetyl-alpha-D-muramoyl-L-alanyl-D-glutamyl-meso-2,6-diaminopimeloyl-D-alanyl-D-alanine + UMP. The protein operates within cell wall biogenesis; peptidoglycan biosynthesis. Its function is as follows. Catalyzes the initial step of the lipid cycle reactions in the biosynthesis of the cell wall peptidoglycan: transfers peptidoglycan precursor phospho-MurNAc-pentapeptide from UDP-MurNAc-pentapeptide onto the lipid carrier undecaprenyl phosphate, yielding undecaprenyl-pyrophosphoryl-MurNAc-pentapeptide, known as lipid I. The protein is Phospho-N-acetylmuramoyl-pentapeptide-transferase of Mycobacterium marinum (strain ATCC BAA-535 / M).